A 294-amino-acid chain; its full sequence is Cytidine deaminase (294 aa).

CMP/dCMP-type deaminase domains lie at 48–168 (DEDA…FGPK) and 186–294 (LEGD…VLLG). A substrate-binding site is contributed by 89–91 (NME). His-102 lines the Zn(2+) pocket. Glu-104 functions as the Proton donor in the catalytic mechanism. Zn(2+) contacts are provided by Cys-129 and Cys-132.

It belongs to the cytidine and deoxycytidylate deaminase family. As to quaternary structure, homodimer. Zn(2+) is required as a cofactor.

It carries out the reaction cytidine + H2O + H(+) = uridine + NH4(+). The enzyme catalyses 2'-deoxycytidine + H2O + H(+) = 2'-deoxyuridine + NH4(+). In terms of biological role, this enzyme scavenges exogenous and endogenous cytidine and 2'-deoxycytidine for UMP synthesis. This Citrobacter koseri (strain ATCC BAA-895 / CDC 4225-83 / SGSC4696) protein is Cytidine deaminase.